A 365-amino-acid polypeptide reads, in one-letter code: MSELRKRNQAAIADLSENIEVTETVELTEKKPETTKSTKGHIIDLIICVSGIYASFLTWAVLQERIATTPYGPDNKIFRASLVINTVQSFLAAAVGYAYLQYKQSRRAAKGLKKNTTVFDSMYTLKQLSLVALSQSLASPLSYTALKYVDYLTSILAKSCKLIPLMALQVTLYRRKFPAYKYAVVVLVTIGVSMFTIFHAAPKKASGAGSEHQLYGLGLLGISMLLDGLTNSTQDQIFRKNADITGPHVMCGLNLLTGVFTTVSLLTFSRPQLDTAIAFIRLHPEIMRDIVLFGLCGAVGQVFIFQTLEKFGSVVLVTVNVTRKMFSMLLSVVWFNHRLTLGQWAGVAAVFGGIGFEAWMKMKKN.

2 helical membrane-spanning segments follow: residues Ile42 to Leu62 and Ala80 to Leu100. N-linked (GlcNAc...) asparagine glycosylation is present at Asn115. 2 helical membrane-spanning segments follow: residues Tyr182–Pro202 and Ser206–Leu226. Asn231 carries an N-linked (GlcNAc...) asparagine glycan. A run of 4 helical transmembrane segments spans residues Val249–Ser269, Asp289–Glu309, Val315–Phe335, and Leu339–Trp359.

It belongs to the nucleotide-sugar transporter family. SLC35B subfamily.

Its subcellular location is the endoplasmic reticulum membrane. Functionally, may be involved in specific transport of UDP-Gal from the cytosol to the Golgi lumen. Involved in the maintenance of optimal conditions for the folding of secretory pathway proteins in the endoplasmic reticulum. The polypeptide is UDP-galactose transporter homolog 1 (HUT1) (Yarrowia lipolytica (strain CLIB 122 / E 150) (Yeast)).